A 300-amino-acid chain; its full sequence is MNYNLSKYPDDVSRLFKPRPPLSYKRPTDYPYAKRQTNPNITGVANLLSTSLKHYMEEFPEGSPNNHLQRYEDIKLSKIKNAQLLDRRLQNWNPNVDPHIKDTDPYRTIFIGRLPYDLDEIELQKYFVKFGEIEKIRIVKDKITQKSKGYAFIVFKDPISSKMAFKEIGVHRGIQIKDRICIVDIERGRTVKYFKPRRLGGGLGGRGYSNRDSRLPGRFASASTSNPAERNYAPRLPRRETSSSAYSADRYGSSTLDARYRGNRPLLSAATPTAAVTSVYKSRNSRTRESQPAPKEAPDY.

Residues 107-198 form the RRM domain; that stretch reads RTIFIGRLPY…RTVKYFKPRR (92 aa). Disordered regions lie at residues 204 to 248 and 263 to 300; these read GGRG…AYSA and NRPL…APDY. Positions 265–279 are enriched in low complexity; the sequence is PLLSAATPTAAVTSV.

As to quaternary structure, component of the spliceosome, where it is associated with snRNP U1. Binds stem loop I of U1 snRNA. Interacts with mRNA.

The protein localises to the nucleus. Its function is as follows. Involved in nuclear mRNA splicing. In Saccharomyces cerevisiae (strain ATCC 204508 / S288c) (Baker's yeast), this protein is U1 small nuclear ribonucleoprotein 70 kDa homolog (SNP1).